Consider the following 381-residue polypeptide: Carbamoyl phosphate synthase small chain (381 aa).

The CPSase stretch occupies residues 1 to 192 (MSKPAILALE…SGYADVSQGD (192 aa)). The L-glutamine site is built by Ser47, Gly244, and Gly246. Positions 196–381 (HVVAYDYGMK…RFVEMMRHRR (186 aa)) constitute a Glutamine amidotransferase type-1 domain. Catalysis depends on Cys272, which acts as the Nucleophile. L-glutamine-binding residues include Leu273, Gln276, Asn314, Gly316, and Phe317. Residues His356 and Glu358 contribute to the active site.

It belongs to the CarA family. In terms of assembly, composed of two chains; the small (or glutamine) chain promotes the hydrolysis of glutamine to ammonia, which is used by the large (or ammonia) chain to synthesize carbamoyl phosphate. Tetramer of heterodimers (alpha,beta)4.

It catalyses the reaction hydrogencarbonate + L-glutamine + 2 ATP + H2O = carbamoyl phosphate + L-glutamate + 2 ADP + phosphate + 2 H(+). The catalysed reaction is L-glutamine + H2O = L-glutamate + NH4(+). It participates in amino-acid biosynthesis; L-arginine biosynthesis; carbamoyl phosphate from bicarbonate: step 1/1. It functions in the pathway pyrimidine metabolism; UMP biosynthesis via de novo pathway; (S)-dihydroorotate from bicarbonate: step 1/3. In terms of biological role, small subunit of the glutamine-dependent carbamoyl phosphate synthetase (CPSase). CPSase catalyzes the formation of carbamoyl phosphate from the ammonia moiety of glutamine, carbonate, and phosphate donated by ATP, constituting the first step of 2 biosynthetic pathways, one leading to arginine and/or urea and the other to pyrimidine nucleotides. The small subunit (glutamine amidotransferase) binds and cleaves glutamine to supply the large subunit with the substrate ammonia. The sequence is that of Carbamoyl phosphate synthase small chain from Halomonas eurihalina.